The following is a 391-amino-acid chain: Processive diacylglycerol beta-glucosyltransferase (391 aa).

It belongs to the glycosyltransferase 28 family. UgtP subfamily.

The protein resides in the cell membrane. The catalysed reaction is a 1,2-diacyl-3-O-(beta-D-glucopyranosyl)-sn-glycerol + UDP-alpha-D-glucose = a 1,2-diacyl-3-O-(beta-D-Glc-(1-&gt;6)-beta-D-Glc)-sn-glycerol + UDP + H(+). It catalyses the reaction a 1,2-diacyl-sn-glycerol + UDP-alpha-D-glucose = a 1,2-diacyl-3-O-(beta-D-glucopyranosyl)-sn-glycerol + UDP + H(+). It participates in glycolipid metabolism; diglucosyl-diacylglycerol biosynthesis. Functionally, processive glucosyltransferase involved in the biosynthesis of both the bilayer- and non-bilayer-forming membrane glucolipids. Is able to successively transfer two glucosyl residues to diacylglycerol (DAG), thereby catalyzing the formation of beta-monoglucosyl-DAG (3-O-(beta-D-glucopyranosyl)-1,2-diacyl-sn-glycerol) and beta-diglucosyl-DAG (3-O-(beta-D-glucopyranosyl-beta-(1-&gt;6)-D-glucopyranosyl)-1,2-diacyl-sn-glycerol). Beta-diglucosyl-DAG is the predominant glycolipid found in Bacillales and is also used as a membrane anchor for lipoteichoic acid (LTA). The protein is Processive diacylglycerol beta-glucosyltransferase of Staphylococcus carnosus (strain TM300).